Reading from the N-terminus, the 80-residue chain is Sulfur carrier protein TusA (80 aa).

Catalysis depends on Cys-17, which acts as the Cysteine persulfide intermediate.

This sequence belongs to the sulfur carrier protein TusA family.

It localises to the cytoplasm. Functionally, sulfur carrier protein which probably makes part of a sulfur-relay system. The chain is Sulfur carrier protein TusA from Pseudomonas putida (strain GB-1).